Here is a 695-residue protein sequence, read N- to C-terminus: Calcium-binding acidic-repeat protein (695 aa).

The or 23 signal peptide spans 1–20 (MSHLWCWLFLVLCLACLVLS). TSP type-3 repeat units lie at residues 24–38 (KDSD…DEIN), 47–56 (ADSDQDGLTD), 70–82 (KDTD…DGVE), 184–196 (GDSD…DGAE), 202–214 (KDSD…DEEE), and 248–260 (GDSD…DGAE). Positions 45–695 (YNADSDQDGL…TDPWRSDHSV (651 aa)) are disordered. Residues 59–70 (EVNRHQTHPQDK) are compositionally biased toward basic and acidic residues. Composition is skewed to acidic residues over residues 271-283 (ADSD…DGEE), 291-306 (PEDP…DGDE), and 313-324 (DPEEDDSDEDGV). TSP type-3 repeat units lie at residues 294–308 (PDSD…DEVN), 317–329 (DDSD…DGAE), 340–352 (EDSD…DGAE), 363–375 (EDSD…DGAE), 379–393 (TDSD…DEVA), 402–414 (ADSD…DGAE), 425–437 (KDTD…DGVE), 470–482 (EDTD…DGAE), 493–505 (ADTD…DGAE), 516–528 (ADSD…DGAE), 539–551 (GDSD…DAAE), 555–569 (KDSD…DEVR), 600–609 (RDTDGDGVAD), 623–635 (ADTD…DGAE), and 646–658 (ADSD…DGAE). Composition is skewed to acidic residues over residues 361–370 (NDEDSDDDGI) and 381–392 (SDGDGLPDEDEV). 2 stretches are compositionally biased toward acidic residues: residues 467 to 477 (PNDEDTDDDGL) and 491 to 500 (EDADTDDDGL). The segment covering 537–546 (NDGDSDDDGV) has biased composition (acidic residues). Over residues 589-603 (EILKHKTDPRNRDTD) the composition is skewed to basic and acidic residues. The span at 665–679 (NAKDGDSDDDGKADG) shows a compositional bias: basic and acidic residues.

Its subcellular location is the secreted. The protein localises to the endoplasmic reticulum. Functionally, may function as a calcium-binding protein. The polypeptide is Calcium-binding acidic-repeat protein (Euglena gracilis).